The chain runs to 624 residues: E3 ubiquitin-protein ligase RLIM (624 aa).

M1 bears the N-acetylmethionine mark. Positions 1–11 are enriched in basic and acidic residues; the sequence is MENSDSNDKGS. Disordered regions lie at residues 1 to 25, 72 to 251, 257 to 276, 291 to 363, and 424 to 522; these read MENSDSNDKGSGDQSAAQRRSQMDR, KEGP…SQTF, NETEGSSRTRHHVTLRQQIS, TRNA…RGGF, and SDSE…TFDE. Positions 104 to 132 are enriched in polar residues; sequence SVRQTGNTTRSGQRGNQSWRAVSRTNPNS. Residues 142–153 are compositionally biased toward low complexity; it reads NVNRNNGSQNSE. S164 bears the Phosphoserine mark. The span at 165-188 shows a compositional bias: polar residues; that stretch reads GENVENNSQRQVENPRSESTSARP. S195, S228, S230, and S276 each carry phosphoserine. Positions 214–229 are enriched in basic and acidic residues; that stretch reads RSPDHRRTRARAERSR. The span at 291–315 shows a compositional bias: polar residues; it reads TRNASQGAGSSDTAASGESTGSGQR. Residues 329–339 show a composition bias toward basic and acidic residues; the sequence is RPGEYRQRDSI. Polar residues predominate over residues 340-356; it reads ASRTRSRSQTPNNTVTY. The span at 445–454 shows a compositional bias: gly residues; sequence GRGGSGGGSS. A compositionally biased stretch (low complexity) spans 455-507; sequence SGSSSSSSSSSSSSSSSSSSSSPSSSSGGESSETSSDLFEGSNEGSSSSGSSG. The RING-type zinc-finger motif lies at 570–611; it reads CSVCITEYTEGNKLRKLPCSHEYHVHCIDRWLSENSTCPICR. Positions 621-624 match the PDZ-binding motif; that stretch reads ESVV.

It belongs to the RNF12 family. Interacts with LIM/homeobox factors such as LHX3. Interacts with LDB1, LDB2 and SIN3A. Interacts with LIMK1. Interacts (via N-terminus) with TERF1. Interacts (via C-terminus) with ESR1. In terms of tissue distribution, expressed in many tissues.

It is found in the nucleus. It carries out the reaction S-ubiquitinyl-[E2 ubiquitin-conjugating enzyme]-L-cysteine + [acceptor protein]-L-lysine = [E2 ubiquitin-conjugating enzyme]-L-cysteine + N(6)-ubiquitinyl-[acceptor protein]-L-lysine.. Its pathway is protein modification; protein ubiquitination. E3 ubiquitin-protein ligase. Acts as a negative coregulator for LIM homeodomain transcription factors by mediating the ubiquitination and subsequent degradation of LIM cofactors LDB1 and LDB2 and by mediating the recruitment the SIN3a/histone deacetylase corepressor complex. Ubiquitination and degradation of LIM cofactors LDB1 and LDB2 allows DNA-bound LIM homeodomain transcription factors to interact with other protein partners such as RLIM. Plays a role in telomere length-mediated growth suppression by mediating the ubiquitination and degradation of TERF1. By targeting ZFP42 for degradation, acts as an activator of random inactivation of X chromosome in the embryo, a stochastic process in which one X chromosome is inactivated to minimize sex-related dosage differences of X-encoded genes in somatic cells of female placental mammals. In Homo sapiens (Human), this protein is E3 ubiquitin-protein ligase RLIM (RLIM).